Consider the following 207-residue polypeptide: Guanylate kinase (207 aa).

Positions 3 to 181 constitute a Guanylate kinase-like domain; it reads GLLFVVSAAS…ALHDLESVIT (179 aa). 10–17 contacts ATP; that stretch reads AASGTGKT.

Belongs to the guanylate kinase family.

The protein resides in the cytoplasm. The catalysed reaction is GMP + ATP = GDP + ADP. Essential for recycling GMP and indirectly, cGMP. The chain is Guanylate kinase from Acinetobacter baylyi (strain ATCC 33305 / BD413 / ADP1).